Here is a 359-residue protein sequence, read N- to C-terminus: Maleylacetate reductase 2 (359 aa).

Belongs to the iron-containing alcohol dehydrogenase family. As to quaternary structure, homodimer.

The catalysed reaction is 3-oxoadipate + NAD(+) = maleylacetate + NADH + H(+). It carries out the reaction 3-oxoadipate + NADP(+) = maleylacetate + NADPH + H(+). It functions in the pathway aromatic compound metabolism; 3-chlorocatechol degradation. Its activity is regulated as follows. Inhibited by p-chloromercuribenzoate and by 3-oxoadipate, and, in a temperature-dependent manner, by manganese. In terms of biological role, plays a major role in the degradation of chloroaromatic compounds by channeling maleylacetate and some of its substituted derivatives into the 3-oxoadipate pathway. This enzyme converts maleylacetate and 2-chloromaleylacetate with similar efficiencies. NADH is preferred to NADPH as the cosubstrate. This is Maleylacetate reductase 2 (tfdFII) from Cupriavidus pinatubonensis (strain JMP 134 / LMG 1197) (Cupriavidus necator (strain JMP 134)).